The sequence spans 231 residues: Ribonuclease P protein component 3 (231 aa).

Belongs to the eukaryotic/archaeal RNase P protein component 3 family. In terms of assembly, consists of a catalytic RNA component and at least 4-5 protein subunits.

It localises to the cytoplasm. The catalysed reaction is Endonucleolytic cleavage of RNA, removing 5'-extranucleotides from tRNA precursor.. Functionally, part of ribonuclease P, a protein complex that generates mature tRNA molecules by cleaving their 5'-ends. This chain is Ribonuclease P protein component 3, found in Methanococcus vannielii (strain ATCC 35089 / DSM 1224 / JCM 13029 / OCM 148 / SB).